Reading from the N-terminus, the 549-residue chain is Probable protein kinase UbiB (549 aa).

The Protein kinase domain occupies D123–L501. ATP-binding positions include L129 to V137 and K152. The active-site Proton acceptor is the D287. The next 2 membrane-spanning stretches (helical) occupy residues S498–Q518 and A520–W540.

This sequence belongs to the ABC1 family. UbiB subfamily.

It is found in the cell inner membrane. It participates in cofactor biosynthesis; ubiquinone biosynthesis [regulation]. Is probably a protein kinase regulator of UbiI activity which is involved in aerobic coenzyme Q (ubiquinone) biosynthesis. The chain is Probable protein kinase UbiB from Shewanella halifaxensis (strain HAW-EB4).